Here is a 197-residue protein sequence, read N- to C-terminus: Isopentenyl-diphosphate Delta-isomerase (197 aa).

The Mn(2+) site is built by His41 and His48. One can recognise a Nudix hydrolase domain in the interval 46–183; that stretch reads RLHRAFSVFL…AWFMTVLDAA (138 aa). Residue Cys83 is part of the active site. Cys83 is a binding site for Mg(2+). His85 contributes to the Mn(2+) binding site. Glu103 lines the Mg(2+) pocket. Mn(2+) contacts are provided by Glu130 and Glu132. The active site involves Glu132.

This sequence belongs to the IPP isomerase type 1 family. Mg(2+) serves as cofactor. The cofactor is Mn(2+).

The protein localises to the cytoplasm. It carries out the reaction isopentenyl diphosphate = dimethylallyl diphosphate. It functions in the pathway isoprenoid biosynthesis; dimethylallyl diphosphate biosynthesis; dimethylallyl diphosphate from isopentenyl diphosphate: step 1/1. In terms of biological role, catalyzes the 1,3-allylic rearrangement of the homoallylic substrate isopentenyl (IPP) to its highly electrophilic allylic isomer, dimethylallyl diphosphate (DMAPP). The polypeptide is Isopentenyl-diphosphate Delta-isomerase (Streptomyces coelicolor (strain ATCC BAA-471 / A3(2) / M145)).